A 727-amino-acid polypeptide reads, in one-letter code: Alpha-1,3-galactosidase A (727 aa).

A disordered region spans residues 220–241 (ATNRTWRTSNPVFPERHEDHRP). Residues 221–230 (TNRTWRTSNP) are compositionally biased toward polar residues. 6 PbH1 repeats span residues 336-358 (KGTV…NIHG), 461-483 (TPTV…LVTT), 484-506 (RRPV…YISS), 517-538 (VRNV…IFFD), 551-572 (HRNV…LSGR), and 574-603 (VGGL…RVGD).

The protein belongs to the glycosyl hydrolase 110 family. A subfamily.

It carries out the reaction Hydrolysis of terminal, non-reducing branched (1-&gt;3)-alpha-D-galactosidic residues, producing free D-galactose.. It catalyses the reaction Hydrolysis of terminal, non-reducing alpha-D-galactose residues in alpha-D-galactosides, including galactose oligosaccharides, galactomannans and galactolipids.. Its function is as follows. Alpha-galactosidase that specifically removes branched alpha-1,3-linked galactose residues present in blood group B antigens. Has no activity toward linear alpha-1,3-linked galactose residues. The chain is Alpha-1,3-galactosidase A (glaA) from Peterkaempfera griseoplana (Streptacidiphilus griseoplanus).